Consider the following 436-residue polypeptide: Acetyl-CoA decarbonylase/synthase complex subunit delta 2 (436 aa).

Belongs to the CdhD family. Heterodimer of delta and gamma chains. The ACDS complex is made up of alpha, epsilon, beta, gamma and delta chains with a probable stoichiometry of (alpha(2)epsilon(2))(4)-beta(8)-(gamma(1)delta(1))(8) (Potential).

It functions in the pathway one-carbon metabolism; methanogenesis from acetate. Its function is as follows. Part of a complex that catalyzes the reversible cleavage of acetyl-CoA, allowing growth on acetate as sole source of carbon and energy. Probably maintains the overall quaternary structure of the ACDS complex. The polypeptide is Acetyl-CoA decarbonylase/synthase complex subunit delta 2 (cdhD2) (Methanosarcina acetivorans (strain ATCC 35395 / DSM 2834 / JCM 12185 / C2A)).